The chain runs to 308 residues: RNA pseudouridylate synthase domain-containing protein 1 (308 aa).

Met1 is subject to N-acetylmethionine. Residue Asp67 is part of the active site. A disordered region spans residues 257–292; sequence APDPDPSEGGPGPCSPCTPLPGPGRPPPPPETEVQR. The span at 269–287 shows a compositional bias: pro residues; that stretch reads PCSPCTPLPGPGRPPPPPE.

The protein belongs to the pseudouridine synthase RluA family.

In Bos taurus (Bovine), this protein is RNA pseudouridylate synthase domain-containing protein 1 (RPUSD1).